Consider the following 241-residue polypeptide: Methylthioribulose-1-phosphate dehydratase (241 aa).

A compositionally biased stretch (polar residues) spans 1–11 (MSSLCDTSNGE). Residues 1–20 (MSSLCDTSNGESHADPCQDK) are disordered. Cys-96 provides a ligand contact to substrate. Residues His-114 and His-116 each coordinate Zn(2+). Residue Glu-138 is the Proton donor/acceptor of the active site. Residue His-194 participates in Zn(2+) binding.

Belongs to the aldolase class II family. MtnB subfamily. The cofactor is Zn(2+).

It localises to the cytoplasm. It carries out the reaction 5-(methylsulfanyl)-D-ribulose 1-phosphate = 5-methylsulfanyl-2,3-dioxopentyl phosphate + H2O. It functions in the pathway amino-acid biosynthesis; L-methionine biosynthesis via salvage pathway; L-methionine from S-methyl-5-thio-alpha-D-ribose 1-phosphate: step 2/6. Functionally, catalyzes the dehydration of methylthioribulose-1-phosphate (MTRu-1-P) into 2,3-diketo-5-methylthiopentyl-1-phosphate (DK-MTP-1-P). Functions in the methionine salvage pathway. May play a role in apoptosis. This is Methylthioribulose-1-phosphate dehydratase from Osmerus mordax (Rainbow smelt).